Consider the following 77-residue polypeptide: Putative sulfur carrier protein YedF (77 aa).

C17 acts as the Cysteine persulfide intermediate in catalysis.

It belongs to the sulfur carrier protein TusA family.

In Escherichia coli O157:H7, this protein is Putative sulfur carrier protein YedF (yedF).